A 362-amino-acid polypeptide reads, in one-letter code: Protein Wnt-16 (362 aa).

The first 29 residues, 1-29, serve as a signal peptide directing secretion; it reads MDRAALLGLSRLCALWAAVLALFPCGAQG. Cystine bridges form between Cys-81/Cys-92, Cys-136/Cys-144, and Cys-146/Cys-165. N-linked (GlcNAc...) asparagine glycosylation occurs at Asn-140. Asn-186 carries an N-linked (GlcNAc...) asparagine glycan. 8 cysteine pairs are disulfide-bonded: Cys-218–Cys-232, Cys-220–Cys-227, Cys-291–Cys-322, Cys-307–Cys-317, Cys-321–Cys-361, Cys-337–Cys-352, Cys-339–Cys-349, and Cys-344–Cys-345. Residue Ser-224 is the site of O-palmitoleoyl serine; by PORCN attachment. Asn-308 is a glycosylation site (N-linked (GlcNAc...) asparagine).

The protein belongs to the Wnt family. Palmitoleoylation is required for efficient binding to frizzled receptors. Depalmitoleoylation leads to Wnt signaling pathway inhibition.

The protein localises to the secreted. Its subcellular location is the extracellular space. It localises to the extracellular matrix. Its function is as follows. Ligand for members of the frizzled family of seven transmembrane receptors. Probable developmental protein. May be a signaling molecule which affects the development of discrete regions of tissues. Is likely to signal over only few cell diameters. The sequence is that of Protein Wnt-16 (WNT16) from Bos taurus (Bovine).